The chain runs to 102 residues: Pyrimidine/purine nucleoside phosphorylase (102 aa).

The protein belongs to the nucleoside phosphorylase PpnP family.

The enzyme catalyses a purine D-ribonucleoside + phosphate = a purine nucleobase + alpha-D-ribose 1-phosphate. The catalysed reaction is adenosine + phosphate = alpha-D-ribose 1-phosphate + adenine. It catalyses the reaction cytidine + phosphate = cytosine + alpha-D-ribose 1-phosphate. It carries out the reaction guanosine + phosphate = alpha-D-ribose 1-phosphate + guanine. The enzyme catalyses inosine + phosphate = alpha-D-ribose 1-phosphate + hypoxanthine. The catalysed reaction is thymidine + phosphate = 2-deoxy-alpha-D-ribose 1-phosphate + thymine. It catalyses the reaction uridine + phosphate = alpha-D-ribose 1-phosphate + uracil. It carries out the reaction xanthosine + phosphate = alpha-D-ribose 1-phosphate + xanthine. In terms of biological role, catalyzes the phosphorolysis of diverse nucleosides, yielding D-ribose 1-phosphate and the respective free bases. Can use uridine, adenosine, guanosine, cytidine, thymidine, inosine and xanthosine as substrates. Also catalyzes the reverse reactions. This chain is Pyrimidine/purine nucleoside phosphorylase, found in Shewanella amazonensis (strain ATCC BAA-1098 / SB2B).